A 510-amino-acid polypeptide reads, in one-letter code: Cytochrome P450 monooxygenase penQ (510 aa).

Residues 9 to 26 (WIVTLIVAATTYCTLRWV) form a helical membrane-spanning segment. Asn-148 and Asn-341 each carry an N-linked (GlcNAc...) asparagine glycan. Cys-448 contributes to the heme binding site. Asn-482 is a glycosylation site (N-linked (GlcNAc...) asparagine).

This sequence belongs to the cytochrome P450 family. Heme serves as cofactor.

The protein localises to the membrane. Its pathway is secondary metabolite biosynthesis. In terms of biological role, cytochrome P450 monooxygenase; part of the gene cluster that mediates the biosynthesis of the indole diterpenes penitrems. The geranylgeranyl diphosphate (GGPP) synthase penG catalyzes the first step in penitrem biosynthesis via conversion of farnesyl pyrophosphate and isopentyl pyrophosphate into geranylgeranyl pyrophosphate (GGPP). Condensation of indole-3-glycerol phosphate with GGPP by the prenyl transferase penC then forms 3-geranylgeranylindole (3-GGI). Epoxidation by the FAD-dependent monooxygenase penM leads to a epoxidized-GGI that is substrate of the terpene cyclase penB for cyclization to yield paspaline. Paspaline is subsequently converted to 13-desoxypaxilline by the cytochrome P450 monooxygenase penP, the latter being then converted to paxilline by the cytochrome P450 monooxygenase penQ. Paxilline is converted to beta-paxitriol via C-10 ketoreduction by the short-chain dehydrogenase PC-15 which can be monoprenylated at the C-20 by the indole diterpene prenyltransferase penD. A two-step elimination (acetylation and elimination) process performed by the O-acetyltransferase PC-16 and the P.simplicissimum ptmI-ortholog not yet identified in P.crustosum, leads to the production of the prenylated form of penijanthine. The FAD-linked oxidoreductase ptmO then converts the prenylated form of penijanthine into PC-M5 which is in turn transformed into PC-M4 by the aromatic dimethylallyltransferase PC-22. A series of oxidation steps involving 4 cytochrome P450 monooxygenases (PC-21, PC-05, PC-23, PC-20) and a FAD-dependent monooxygenase (PC-14) are required for the transformation of PC-M4 to penitrems A and E. Synthesis of these final products is proposed to proceed via penitrems D and C (PC-21, PC-05, PC-14) and penitrems B and F (PC-21, PC-05, PC-14, PC-23). This chain is Cytochrome P450 monooxygenase penQ, found in Penicillium crustosum (Blue mold fungus).